The following is a 514-amino-acid chain: MSCPIDKRRTLIAFLRRLRDLGQPPRSVTSKASASRAPKEVPLCPLMTDGETRNVTSLPGPTNWPLLGSLLEIFWKGGLKKQHDTLAEYHKKYGQIFRMKLGSFDSVHLGSPSLLEALYRTESAHPQRLEIKPWKAYRDHRNEAYGLMILEGQEWQRVRSAFQKKLMKPVEIMKLDKKINEVLADFLERMDELCDERGRIPDLYSELNKWSFESICLVLYEKRFGLLQKETEEEALTFITAIKTMMSTFGKMMVTPVELHKRLNTKVWQAHTLAWDTIFKSVKPCIDNRLQRYSQQPGADFLCDIYQQDHLSKKELYAAVTELQLAAVETTANSLMWILYNLSRNPQAQRRLLQEVQSVLPDNQTPRAEDLRNMPYLKACLKESMRLTPSVPFTTRTLDKPTVLGEYALPKGTVLTLNTQVLGSSEDNFEDSHKFRPERWLQKEKKINPFAHLPFGIGKRMCIGRRLAELQLHLALCWIIQKYDIVATDNEPVEMLHLGILVPSRELPIAFRPR.

Residues 1–35 (MSCPIDKRRTLIAFLRRLRDLGQPPRSVTSKASAS) constitute a mitochondrion transit peptide. Residue C462 participates in heme binding.

Belongs to the cytochrome P450 family. Heme serves as cofactor.

The protein localises to the mitochondrion. It catalyses the reaction calcitriol + 2 reduced [adrenodoxin] + O2 + 2 H(+) = calcitetrol + 2 oxidized [adrenodoxin] + H2O. The enzyme catalyses calcitetrol + 2 reduced [adrenodoxin] + O2 + 2 H(+) = (1S)-1,25-dihydroxy-24-oxocalciol + 2 oxidized [adrenodoxin] + 2 H2O. The catalysed reaction is (1S)-1,25-dihydroxy-24-oxocalciol + 2 reduced [adrenodoxin] + O2 + 2 H(+) = (1S)-1,23,25-trihydroxy-24-oxocalciol + 2 oxidized [adrenodoxin] + H2O. It carries out the reaction (1S)-1,23-dihydroxy-24,25,26,27-tetranorcalciol + 2 reduced [adrenodoxin] + O2 + 2 H(+) = (1S)-1-hydroxy-23-oxo-24,25,26,27-tetranorcalciol + 2 oxidized [adrenodoxin] + 2 H2O. It catalyses the reaction (1S)-1-hydroxy-23-oxo-24,25,26,27-tetranorcalciol + 2 reduced [adrenodoxin] + O2 + H(+) = calcitroate + 2 oxidized [adrenodoxin] + H2O. The enzyme catalyses calcidiol + 2 reduced [adrenodoxin] + O2 + 2 H(+) = secalciferol + 2 oxidized [adrenodoxin] + H2O. The catalysed reaction is secalciferol + 2 reduced [adrenodoxin] + O2 + 2 H(+) = 25-hydroxy-24-oxocalciol + 2 oxidized [adrenodoxin] + 2 H2O. It carries out the reaction 25-hydroxy-24-oxocalciol + 2 reduced [adrenodoxin] + O2 + 2 H(+) = 23S,25-dihydroxy-24-oxocholecalciferol + 2 oxidized [adrenodoxin] + H2O. It catalyses the reaction 20S,23-dihydroxycholecalciferol + 2 reduced [adrenodoxin] + O2 + 2 H(+) = 20S,23,25-trihydroxycholecalciferol + 2 oxidized [adrenodoxin] + H2O. The enzyme catalyses 20S,23-dihydroxycholecalciferol + 2 reduced [adrenodoxin] + O2 + 2 H(+) = 20S,23,24-trihydroxycholecalciferol + 2 oxidized [adrenodoxin] + H2O. The catalysed reaction is 20S-hydroxycholecalciferol + 2 reduced [adrenodoxin] + O2 + 2 H(+) = 20S,25-dihydroxycholecalciferol + 2 oxidized [adrenodoxin] + H2O. It carries out the reaction 20S-hydroxycholecalciferol + 2 reduced [adrenodoxin] + O2 + 2 H(+) = 20S,24S-dihydroxycholecalciferol + 2 oxidized [adrenodoxin] + H2O. It catalyses the reaction 20S-hydroxycholecalciferol + 2 reduced [adrenodoxin] + O2 + 2 H(+) = 20S,24R-dihydroxycholecalciferol + 2 oxidized [adrenodoxin] + H2O. Its function is as follows. A cytochrome P450 monooxygenase with a key role in vitamin D catabolism and calcium homeostasis. Via C24-oxidation pathway, catalyzes the inactivation of both the vitamin D precursor calcidiol (25-hydroxyvitamin D(3)) and the active hormone calcitriol (1-alpha,25-dihydroxyvitamin D(3)). With initial hydroxylation at C-24 (via C24-oxidation pathway), performs a sequential 6-step oxidation of calcitriol leading to the formation of the biliary metabolite calcitroic acid. Hydroxylates at C-24 or C-25 other vitamin D active metabolites, such as CYP11A1-derived secosteroids 20S-hydroxycholecalciferol and 20S,23-dihydroxycholecalciferol. Mechanistically, uses molecular oxygen inserting one oxygen atom into a substrate, and reducing the second into a water molecule, with two electrons provided by NADPH via FDXR/adrenodoxin reductase and FDX1/adrenodoxin. The chain is 1,25-dihydroxyvitamin D(3) 24-hydroxylase, mitochondrial (Cyp24a1) from Rattus norvegicus (Rat).